We begin with the raw amino-acid sequence, 160 residues long: Nucleotide-binding protein Smal_3487 (160 aa).

The protein belongs to the YajQ family.

In terms of biological role, nucleotide-binding protein. In Stenotrophomonas maltophilia (strain R551-3), this protein is Nucleotide-binding protein Smal_3487.